A 157-amino-acid polypeptide reads, in one-letter code: Class-10 pathogenesis-related protein 1 (157 aa).

Belongs to the BetVI family. Expressed in roots. Detected in nodules and leaves, but not in stems and flowers.

This is Class-10 pathogenesis-related protein 1 (PR10-1) from Medicago truncatula (Barrel medic).